The following is a 213-amino-acid chain: Large ribosomal subunit protein uL3 (213 aa).

The protein belongs to the universal ribosomal protein uL3 family. As to quaternary structure, part of the 50S ribosomal subunit. Forms a cluster with proteins L14 and L19.

Its function is as follows. One of the primary rRNA binding proteins, it binds directly near the 3'-end of the 23S rRNA, where it nucleates assembly of the 50S subunit. The polypeptide is Large ribosomal subunit protein uL3 (Kosmotoga olearia (strain ATCC BAA-1733 / DSM 21960 / TBF 19.5.1)).